The sequence spans 79 residues: Calcium/calmodulin-dependent protein kinase II inhibitor 2 (79 aa).

The interval 43-69 (KRPPKLGQIGRAKRVVIEDDRIDEVLK) is inhibitory domain.

This sequence belongs to the CAMK2N family.

Its subcellular location is the nucleus. The protein localises to the cytoplasm. It is found in the cytosol. Its function is as follows. Potent and specific cellular inhibitor of CaM-kinase II (CAMK2). Traps Ca(2+)/calmodulin on CAMK2. This is Calcium/calmodulin-dependent protein kinase II inhibitor 2 (camk2n2) from Xenopus tropicalis (Western clawed frog).